Consider the following 480-residue polypeptide: MKNQHNTFWVLCLLFVMFDETFSAFPFGNGRIQFDPIRENSSDNIECFLDYMELWVPRKQINGLVLWLSQIMRFPVSLSSLDRSNQQLSRCKYFLDADADGNFLFRVHYTGCYVQTQEGFYKLEIHMVKKTSSGRGQSNRYLMRCPAMTAQLGREKLRCDPNYVQVSRPIPLGNSNDQADWFFSLRGELVVSIEDASLIGVEVDVSNSSVTVSGLRGQLLDGIKILDRQIDNLHLWLAHGFYAYSLEASCPSVSQHPGEEVILHIPKQRVGLVKRGSYSADILTLKNLIVGQSANVTVTVTENKQFVVINIPSHEVLQRQDCYTTIGNNPGVQFFYCIDLVLEFTEMAYPINWTLENYYECSVRVPQMIQPKPTTAETFHKIKLELHTTPRSETRTALVITPTQDNTLASTSVTLAAKLRESVHSAIVQESSKTEMSASGYDAELDHVASGEYFNRIEGSGYYAETNISAALRLRKCHHL.

An N-terminal signal peptide occupies residues 1–23 (MKNQHNTFWVLCLLFVMFDETFS).

Expressed specifically by cells of the ciliated left-right organizer.

It localises to the secreted. This is Ciliated left-right organizer protein containing ZP-N domains homolog from Xenopus tropicalis (Western clawed frog).